Reading from the N-terminus, the 135-residue chain is Integration host factor subunit beta (135 aa).

The segment covering 83 to 92 (GKELRERVDR) has biased composition (basic and acidic residues). Residues 83 to 135 (GKELRERVDRTVTQGGGMNGNGHAPHGKTGQSQLGSQSPASLHDDGQLNLVRS) form a disordered region. Residues 111 to 122 (TGQSQLGSQSPA) show a composition bias toward polar residues.

This sequence belongs to the bacterial histone-like protein family. Heterodimer of an alpha and a beta chain.

This protein is one of the two subunits of integration host factor, a specific DNA-binding protein that functions in genetic recombination as well as in transcriptional and translational control. The protein is Integration host factor subunit beta of Cupriavidus metallidurans (strain ATCC 43123 / DSM 2839 / NBRC 102507 / CH34) (Ralstonia metallidurans).